A 1269-amino-acid chain; its full sequence is Histone-lysine N-methyltransferase SETDB1 (1269 aa).

The stretch at 9-63 (KELGISMDDLRELIDRELEKIEFVKQRKAQLLEMEQLVKQKEAEVDHVDKLFDNA) forms a coiled coil. 2 disordered regions span residues 85-121 (YKES…GEAV) and 153-188 (QKKS…DMSK). Over residues 103–112 (EIPDEDDDDV) the composition is skewed to acidic residues. Low complexity predominate over residues 164–177 (SSHPSSPTSSVGGS). Tudor domains lie at 250–312 (ENLT…RPWS) and 340–395 (VLLK…MFSM). The segment covering 396–414 (KTSNASTQEKQQAGQQRTR) has biased composition (polar residues). Positions 396–516 (KTSNASTQEK…FQSNQSVQPV (121 aa)) are disordered. The segment covering 462-476 (DSQQAQSKKQVAKKS) has biased composition (low complexity). Residues 486-497 (SGQSSPIPTESV) are compositionally biased toward polar residues. One can recognise an MBD domain in the interval 620-691 (HRGKNPLLVP…EMFCLDPYVL (72 aa)). The region spanning 753–826 (VGCDCTDGCR…MCNNRLVQHG (74 aa)) is the Pre-SET domain. Zn(2+) contacts are provided by Cys-755, Cys-757, Cys-761, Cys-767, Cys-769, Cys-807, Cys-811, Cys-813, and Cys-818. In terms of domain architecture, SET spans 829–1244 (VRLQLFKTQN…AGTELTWDYN (416 aa)). S-adenosyl-L-methionine-binding positions include 839-841 (KGW), Asp-877, and Tyr-879. Residues 894 to 1139 (EGYESDAKSS…VAASAGPVKR (246 aa)) form a disordered region. Positions 919 to 932 (SGSEDQEESNDSSD) are enriched in acidic residues. Basic and acidic residues-rich tracts occupy residues 968-989 (ASKD…ETSK) and 1021-1033 (ETDK…EASK). The segment covering 1078–1094 (TEEVLTLSSSSDSEVGS) has biased composition (low complexity). A compositionally biased stretch (polar residues) spans 1106–1120 (ATANDSDDIQTISSG). S-adenosyl-L-methionine is bound by residues Arg-1198 and 1201-1202 (NH). The Zn(2+) site is built by Cys-1204, Cys-1257, Cys-1259, and Cys-1264. The 17-residue stretch at 1253-1269 (KKLLCCCGSTECRGRLL) folds into the Post-SET domain.

Belongs to the class V-like SAM-binding methyltransferase superfamily. Histone-lysine methyltransferase family. Suvar3-9 subfamily.

It localises to the nucleus. Its subcellular location is the chromosome. It carries out the reaction N(6),N(6)-dimethyl-L-lysyl(9)-[histone H3] + S-adenosyl-L-methionine = N(6),N(6),N(6)-trimethyl-L-lysyl(9)-[histone H3] + S-adenosyl-L-homocysteine + H(+). Histone methyltransferase that specifically trimethylates 'Lys-9' of histone H3. H3 'Lys-9' trimethylation represents a specific tag for epigenetic transcriptional repression by recruiting HP1 (CBX1, CBX3 and/or CBX5) proteins to methylated histones. Mainly functions in euchromatin regions, thereby playing a central role in the silencing of euchromatic genes. H3 'Lys-9' trimethylation is coordinated with DNA methylation. Plays a role in promoter hypermethylation and transcriptional silencing of tumor suppressor genes (TSGs) or other tumor-related genes. Also required to maintain a transcriptionally repressive state of genes in undifferentiated embryonic stem cells (ESCs). Associates at promoter regions of tumor suppressor genes (TSGs) leading to their gene silencing. The sequence is that of Histone-lysine N-methyltransferase SETDB1 (setdb1) from Xenopus laevis (African clawed frog).